A 252-amino-acid chain; its full sequence is Small ribosomal subunit protein uS2 (252 aa).

Belongs to the universal ribosomal protein uS2 family.

This Alcanivorax borkumensis (strain ATCC 700651 / DSM 11573 / NCIMB 13689 / SK2) protein is Small ribosomal subunit protein uS2.